Here is a 238-residue protein sequence, read N- to C-terminus: tRNA (guanine-N(7)-)-methyltransferase (238 aa).

S-adenosyl-L-methionine-binding residues include glutamate 68, glutamate 93, aspartate 120, and aspartate 143. The active site involves aspartate 143. Substrate-binding positions include lysine 147, aspartate 179, and 216-219; that span reads TKFE.

The protein belongs to the class I-like SAM-binding methyltransferase superfamily. TrmB family.

It catalyses the reaction guanosine(46) in tRNA + S-adenosyl-L-methionine = N(7)-methylguanosine(46) in tRNA + S-adenosyl-L-homocysteine. The protein operates within tRNA modification; N(7)-methylguanine-tRNA biosynthesis. Catalyzes the formation of N(7)-methylguanine at position 46 (m7G46) in tRNA. In Shewanella baltica (strain OS223), this protein is tRNA (guanine-N(7)-)-methyltransferase.